We begin with the raw amino-acid sequence, 752 residues long: Glutamate carboxypeptidase 2 (752 aa).

The Cytoplasmic portion of the chain corresponds to Met1–Arg22. Ser10 is modified (phosphoserine). The chain crosses the membrane as a helical; Signal-anchor for type II membrane protein span at residues Val23–Ile44. Residues Lys45–Ala752 lie on the Extracellular side of the membrane. N-linked (GlcNAc...) asparagine glycans are attached at residues Asn78, Asn123, and Asn155. The substrate site is built by Arg212 and Asn259. Ca(2+) is bound by residues Thr271 and Tyr274. The interval Ala276 to Leu589 is NAALADase. Asn338 carries N-linked (GlcNAc...) asparagine glycosylation. Zn(2+) contacts are provided by His379 and Asp389. Glu426 contacts substrate. Glu426 acts as the Nucleophile; for NAALADase activity in catalysis. Glu427 is a binding site for Zn(2+). Positions 435 and 438 each coordinate Ca(2+). Asp455 is a binding site for Zn(2+). N-linked (GlcNAc...) asparagine glycans are attached at residues Asn461 and Asn478. Residues Ser519–Gly520, Asn521, Arg536–Arg538, Tyr554, and Tyr554–His555 each bind substrate. Zn(2+) is bound at residue His555. Asn615 carries an N-linked (GlcNAc...) asparagine glycan. Ser630 acts as the Charge relay system in catalysis. Asn640 carries N-linked (GlcNAc...) asparagine glycosylation. Residues Asp668 and His691 each act as charge relay system in the active site. Lys701 to Tyr702 is a binding site for substrate. An N-linked (GlcNAc...) asparagine glycan is attached at Asn722.

It belongs to the peptidase M28 family. M28B subfamily. As to quaternary structure, homodimer. Zn(2+) is required as a cofactor. As to expression, expressed predominantly in the hippocampal region of the brain and in kidney. Lower levels in the ovary, testis and mandibular gland.

The protein resides in the cell membrane. It catalyses the reaction Release of an unsubstituted, C-terminal glutamyl residue, typically from Ac-Asp-Glu or folylpoly-gamma-glutamates.. Its activity is regulated as follows. The NAALADase and folate hydrolase activities are inhibited by quisqualic acid. Has both folate hydrolase and N-acetylated-alpha-linked-acidic dipeptidase (NAALADase) activity. Has a preference for tri-alpha-glutamate peptides. In the intestine, required for the uptake of folate. In the brain, modulates excitatory neurotransmission through the hydrolysis of the neuropeptide, N-aceylaspartylglutamate (NAAG), thereby releasing glutamate. Functionally, also exhibits a dipeptidyl-peptidase IV type activity. In vitro, cleaves Gly-Pro-AMC. The chain is Glutamate carboxypeptidase 2 (Folh1) from Mus musculus (Mouse).